A 299-amino-acid polypeptide reads, in one-letter code: MAWRKLGRIFAPSGELDWSRSHAALPVPEWIEGDIFRIYFSGRDGQNRSSIGSVIVDLAVGGKILDIPAEPILRPGARGMFDDCGVSIGSIVRAGDTRLLYYTGWNLAVTVPWKNTIGVAISEAGAPFERWSTFPVVALDERDPFSLSYPWVIQDGGTYRMWYGSNLGWGEGTDEIPHVIRYAQSRDGVHWEKQDRVHIDTSGSDNSAACRPYVVRDAGVYRMWFCARGAKYRIYCATSEDGLTWRQLGKDEGIDVSPDSWDSDMIEYPCVFDHRGQRFMLYSGDGYGRTGFGLAVLEN.

This is an uncharacterized protein from Mycobacterium tuberculosis (strain ATCC 25618 / H37Rv).